We begin with the raw amino-acid sequence, 506 residues long: MINSFSLFAHITPIIRSSLHSRYSVISSRKAMSSLAAAPYRHVMMPFSPAQDAQVHGNSALTKLTDAIPDLKIYTRSSPHYESLRGVYNKLITAQPLAICRPTSVAQVQAIVKTVSGLGIPLGVRGGGHDVFGRGCIADSVTIDMRELDTQELSQDKKTVKVGGGITSKNLVGFLGSHNLCTSNGFAGEAGWTSWASWGGYGPLGDYVGLGVDNIVGAKIVTASGDVVDAKGDSELLWALRGGGGNFGVIAETDVRVYPMSTIQAGFIVYPWPETADVLLRLQALLDSGVPDKLCLQAGFTKGEWGLGMAITYIWPEAETIGPESEEWLQKLKGLGTCIVDTVAETTFEAFQASISSAISNPVNVTSRHISISKFTSDTLNQLIGACESMPAEADCSITCTILHGKAAQANVLSAFGTRRPHIMLHINAVTEEAAHEHVAIAWADRLVDGVEATGDSIGSTYVSFMESDKDPKGCYGENWERLKAVKKEVDPNDVFRFVHGRIPAA.

In terms of domain architecture, FAD-binding PCMH-type spans 92 to 260 (ITAQPLAICR…AETDVRVYPM (169 aa)).

This sequence belongs to the oxygen-dependent FAD-linked oxidoreductase family. As to quaternary structure, might be part of an extracellular enzyme complex composed of GIP1, aurF, aurO and aurS. It depends on FAD as a cofactor.

The protein localises to the secreted. It localises to the extracellular space. Its pathway is pigment biosynthesis. FAD-linked oxidoreductase; part of the gene cluster that mediates the biosynthesis of aurofusarin, a red mycelium pigment which is acting as a mycotoxin. The first step is performed by the polyketide synthase which condenses one acetyl-CoA and 6 malonyl-CoA units to form the first intermediate, the cyclic heptaketide and yellow pigment YWA1. The C2 hydroxyl group in the pyrone ring of YWA1 is probably formed during ring closure by an aldol-type cyclization reaction. The dehydratase aurZ then acts as the first tailoring enzyme in the aurofusarin biosynthetic pathway by converting YWA1 to nor-rubrofusarin. Nor-rubrofusarin is then methylated to rubrofusarin by the O-methyltransferase aurJ. Rubrofusarin is then transported across the plasma membrane by the rubrofusarin-specific pump aurT for further enzymatic processing by the extracellular complex composed of GIP1, aurF, aurO and aurS to yield aurofusarin. This is FAD-linked oxidoreductase aurO from Gibberella zeae (strain ATCC MYA-4620 / CBS 123657 / FGSC 9075 / NRRL 31084 / PH-1) (Wheat head blight fungus).